Reading from the N-terminus, the 199-residue chain is Elongation factor Ts (199 aa).

Positions 81–84 (TDFV) are involved in Mg(2+) ion dislocation from EF-Tu.

The protein belongs to the EF-Ts family.

The protein localises to the cytoplasm. Associates with the EF-Tu.GDP complex and induces the exchange of GDP to GTP. It remains bound to the aminoacyl-tRNA.EF-Tu.GTP complex up to the GTP hydrolysis stage on the ribosome. The protein is Elongation factor Ts of Thermotoga petrophila (strain ATCC BAA-488 / DSM 13995 / JCM 10881 / RKU-1).